The primary structure comprises 427 residues: Glutamyl-tRNA reductase (427 aa).

Substrate contacts are provided by residues 50 to 53 (TCNR), Ser110, 115 to 117 (ETQ), and Gln121. Cys51 acts as the Nucleophile in catalysis. An NADP(+)-binding site is contributed by 190 to 195 (GAGEMG).

The protein belongs to the glutamyl-tRNA reductase family. In terms of assembly, homodimer.

The enzyme catalyses (S)-4-amino-5-oxopentanoate + tRNA(Glu) + NADP(+) = L-glutamyl-tRNA(Glu) + NADPH + H(+). Its pathway is porphyrin-containing compound metabolism; protoporphyrin-IX biosynthesis; 5-aminolevulinate from L-glutamyl-tRNA(Glu): step 1/2. Functionally, catalyzes the NADPH-dependent reduction of glutamyl-tRNA(Glu) to glutamate 1-semialdehyde (GSA). This is Glutamyl-tRNA reductase from Campylobacter concisus (strain 13826).